The chain runs to 384 residues: Cytochrome b (384 aa).

4 consecutive transmembrane segments (helical) span residues 32 to 52 (FGSL…FLSM), 75 to 96 (FLLR…YFHI), 111 to 131 (WRVG…GYVL), and 176 to 196 (FFSL…VHLI). Histidine 81 and histidine 95 together coordinate heme b. Positions 180 and 194 each coordinate heme b. Histidine 199 contributes to the a ubiquinone binding site. Transmembrane regions (helical) follow at residues 224 to 244 (SKDW…VYLM), 286 to 306 (FGGV…PLLH), 318 to 338 (FGRM…WIGS), and 345 to 366 (FIII…LIPL).

It belongs to the cytochrome b family. The main subunits of complex b-c1 are: cytochrome b, cytochrome c1 and the Rieske protein. Requires heme b as cofactor.

The protein localises to the mitochondrion inner membrane. Component of the ubiquinol-cytochrome c reductase complex (complex III or cytochrome b-c1 complex) that is part of the mitochondrial respiratory chain. The b-c1 complex mediates electron transfer from ubiquinol to cytochrome c. Contributes to the generation of a proton gradient across the mitochondrial membrane that is then used for ATP synthesis. The protein is Cytochrome b (MT-CYB) of Acropora tenuis (Purple tipped acropora).